Reading from the N-terminus, the 346-residue chain is Large ribosomal subunit protein uL3 (346 aa).

Positions K324–Q346 are disordered.

It belongs to the universal ribosomal protein uL3 family. In terms of assembly, part of the 50S ribosomal subunit. Forms a cluster with proteins L14 and L24e.

Functionally, one of the primary rRNA binding proteins, it binds directly near the 3'-end of the 23S rRNA, where it nucleates assembly of the 50S subunit. This Thermococcus gammatolerans (strain DSM 15229 / JCM 11827 / EJ3) protein is Large ribosomal subunit protein uL3.